Here is a 333-residue protein sequence, read N- to C-terminus: Glyceraldehyde-3-phosphate dehydrogenase (333 aa).

NAD(+)-binding positions include Arg-11 to Ile-12, Asp-35, and Thr-121. Residues Ser-151 to Thr-153 and Thr-182 contribute to the D-glyceraldehyde 3-phosphate site. The active-site Nucleophile is the Cys-152. Residue Asn-183 participates in NAD(+) binding. D-glyceraldehyde 3-phosphate-binding positions include Arg-197, Thr-210 to Gly-211, and Arg-233. An NAD(+)-binding site is contributed by Asn-315.

Belongs to the glyceraldehyde-3-phosphate dehydrogenase family. Homotetramer.

The protein localises to the cytoplasm. It catalyses the reaction D-glyceraldehyde 3-phosphate + phosphate + NAD(+) = (2R)-3-phospho-glyceroyl phosphate + NADH + H(+). Its pathway is carbohydrate degradation; glycolysis; pyruvate from D-glyceraldehyde 3-phosphate: step 1/5. In terms of biological role, catalyzes the oxidative phosphorylation of glyceraldehyde 3-phosphate (G3P) to 1,3-bisphosphoglycerate (BPG) using the cofactor NAD. The first reaction step involves the formation of a hemiacetal intermediate between G3P and a cysteine residue, and this hemiacetal intermediate is then oxidized to a thioester, with concomitant reduction of NAD to NADH. The reduced NADH is then exchanged with the second NAD, and the thioester is attacked by a nucleophilic inorganic phosphate to produce BPG. The protein is Glyceraldehyde-3-phosphate dehydrogenase (gap) of Thermotoga maritima (strain ATCC 43589 / DSM 3109 / JCM 10099 / NBRC 100826 / MSB8).